The sequence spans 195 residues: Elongation factor P (195 aa).

Belongs to the elongation factor P family.

The protein resides in the cytoplasm. Its pathway is protein biosynthesis; polypeptide chain elongation. Involved in peptide bond synthesis. Stimulates efficient translation and peptide-bond synthesis on native or reconstituted 70S ribosomes in vitro. Probably functions indirectly by altering the affinity of the ribosome for aminoacyl-tRNA, thus increasing their reactivity as acceptors for peptidyl transferase. This is Elongation factor P from Rhodopirellula baltica (strain DSM 10527 / NCIMB 13988 / SH1).